Reading from the N-terminus, the 128-residue chain is UPF0325 protein YaeH (128 aa).

The protein belongs to the UPF0325 family.

The protein is UPF0325 protein YaeH of Shigella boydii serotype 18 (strain CDC 3083-94 / BS512).